The primary structure comprises 598 residues: Elongation factor 4 (598 aa).

The region spanning 5 to 187 is the tr-type G domain; the sequence is SHIRNFSIIA…RLVATIPAPT (183 aa). Residues 17 to 22 and 134 to 137 each bind GTP; these read DHGKST and NKMD.

This sequence belongs to the TRAFAC class translation factor GTPase superfamily. Classic translation factor GTPase family. LepA subfamily.

It is found in the cell inner membrane. The enzyme catalyses GTP + H2O = GDP + phosphate + H(+). Required for accurate and efficient protein synthesis under certain stress conditions. May act as a fidelity factor of the translation reaction, by catalyzing a one-codon backward translocation of tRNAs on improperly translocated ribosomes. Back-translocation proceeds from a post-translocation (POST) complex to a pre-translocation (PRE) complex, thus giving elongation factor G a second chance to translocate the tRNAs correctly. Binds to ribosomes in a GTP-dependent manner. The sequence is that of Elongation factor 4 from Pseudomonas syringae pv. syringae (strain B728a).